The chain runs to 460 residues: Hydroxymethylglutaryl-CoA synthase erg13B (460 aa).

Glutamate 86 acts as the Proton donor/acceptor in catalysis. Cysteine 120 (acyl-thioester intermediate) is an active-site residue. Positions 120, 162, 212, 263, 272, 340, and 374 each coordinate (3S)-3-hydroxy-3-methylglutaryl-CoA. Histidine 263 (proton donor/acceptor) is an active-site residue.

The protein belongs to the thiolase-like superfamily. HMG-CoA synthase family.

The enzyme catalyses acetoacetyl-CoA + acetyl-CoA + H2O = (3S)-3-hydroxy-3-methylglutaryl-CoA + CoA + H(+). The protein operates within metabolic intermediate biosynthesis; (R)-mevalonate biosynthesis; (R)-mevalonate from acetyl-CoA: step 2/3. Hydroxymethylglutaryl-CoA synthase; part of the first module of ergosterol biosynthesis pathway that includes the early steps of the pathway, conserved across all eukaryotes, and which results in the formation of mevalonate from acetyl-coenzyme A (acetyl-CoA). Erg13A and erg13B condense acetyl-CoA with acetoacetyl-CoA to form hydroxymethylglutaryl-CoA (HMG-CoA). The first module starts with the action of the cytosolic acetyl-CoA acetyltransferase erg10B that catalyzes the formation of acetoacetyl-CoA. The hydroxymethylglutaryl-CoA synthases erg13A and erg13B then condense acetyl-CoA with acetoacetyl-CoA to form HMG-CoA. The rate-limiting step of the early module is the reduction to mevalonate by the 3-hydroxy-3-methylglutaryl-coenzyme A (HMG-CoA) reductases hmg1 and hmg2. Mevalonate is also a precursor for the extracellular siderophore triacetylfusarinine C (TAFC). This chain is Hydroxymethylglutaryl-CoA synthase erg13B, found in Aspergillus fumigatus (strain ATCC MYA-4609 / CBS 101355 / FGSC A1100 / Af293) (Neosartorya fumigata).